We begin with the raw amino-acid sequence, 335 residues long: NADP(+)-dependent glycerol-3-phosphate dehydrogenase (335 aa).

G137 contributes to the sn-glycerol 3-phosphate binding site. A141 contributes to the NADPH binding site. Positions 192, 250, 259, and 260 each coordinate sn-glycerol 3-phosphate. The active-site Proton acceptor is K192. An NADPH-binding site is contributed by R259. 2 residues coordinate NADPH: V287 and E289.

It belongs to the NAD-dependent glycerol-3-phosphate dehydrogenase family. Homodimer.

Its subcellular location is the cytoplasm. The enzyme catalyses sn-glycerol 3-phosphate + NADP(+) = dihydroxyacetone phosphate + NADPH + H(+). Functionally, catalyzes the reduction of the glycolytic intermediate dihydroxyacetone phosphate (DHAP) to sn-glycerol 3-phosphate (G3P). Shows a 15-fold preference for NADPH over NADH in the reduction process. Can also catalyze the reverse reaction in vitro. Shows no activity with dihydroxyacetone, glycerol, glycerol-2-phosphate, D-glyceraldehyde-3-phosphate, DL-glyceraldehyde, D-erythrose-4-phosphate, D-fructose-6-phosphate, beta-D-glucose-6-phosphate, or alpha-D-galactose-1-phosphate. This Archaeoglobus fulgidus (strain ATCC 49558 / DSM 4304 / JCM 9628 / NBRC 100126 / VC-16) protein is NADP(+)-dependent glycerol-3-phosphate dehydrogenase.